The primary structure comprises 406 residues: Argininosuccinate synthase (406 aa).

ATP-binding positions include 10–18 (AYSGGLDTS) and Ala-37. 2 residues coordinate L-citrulline: Tyr-88 and Ser-93. Gly-118 is an ATP binding site. 3 residues coordinate L-aspartate: Thr-120, Asn-124, and Asp-125. Residue Asn-124 coordinates L-citrulline. Residues Arg-128, Ser-179, Ser-188, Glu-264, and Tyr-276 each contribute to the L-citrulline site.

The protein belongs to the argininosuccinate synthase family. Type 1 subfamily. As to quaternary structure, homotetramer.

The protein resides in the cytoplasm. The enzyme catalyses L-citrulline + L-aspartate + ATP = 2-(N(omega)-L-arginino)succinate + AMP + diphosphate + H(+). It participates in amino-acid biosynthesis; L-arginine biosynthesis; L-arginine from L-ornithine and carbamoyl phosphate: step 2/3. The sequence is that of Argininosuccinate synthase from Roseobacter denitrificans (strain ATCC 33942 / OCh 114) (Erythrobacter sp. (strain OCh 114)).